Consider the following 434-residue polypeptide: Serine hydroxymethyltransferase 2 (434 aa).

(6S)-5,6,7,8-tetrahydrofolate is bound by residues L136 and G140–L142. Position 245 is an N6-(pyridoxal phosphate)lysine (K245).

The protein belongs to the SHMT family. Homodimer. It depends on pyridoxal 5'-phosphate as a cofactor.

It localises to the cytoplasm. It catalyses the reaction (6R)-5,10-methylene-5,6,7,8-tetrahydrofolate + glycine + H2O = (6S)-5,6,7,8-tetrahydrofolate + L-serine. Its pathway is one-carbon metabolism; tetrahydrofolate interconversion. It participates in amino-acid biosynthesis; glycine biosynthesis; glycine from L-serine: step 1/1. Catalyzes the reversible interconversion of serine and glycine with tetrahydrofolate (THF) serving as the one-carbon carrier. This reaction serves as the major source of one-carbon groups required for the biosynthesis of purines, thymidylate, methionine, and other important biomolecules. Also exhibits THF-independent aldolase activity toward beta-hydroxyamino acids, producing glycine and aldehydes, via a retro-aldol mechanism. This is Serine hydroxymethyltransferase 2 from Rhodopseudomonas palustris (strain ATCC BAA-98 / CGA009).